Here is a 154-residue protein sequence, read N- to C-terminus: Ribonuclease H (154 aa).

An RNase H type-1 domain is found at 1-142; the sequence is MEKTVEIYTD…VDDLARDAAG (142 aa). Residues aspartate 10, glutamate 48, aspartate 70, and aspartate 134 each contribute to the Mg(2+) site.

It belongs to the RNase H family. Monomer. Requires Mg(2+) as cofactor.

It is found in the cytoplasm. It catalyses the reaction Endonucleolytic cleavage to 5'-phosphomonoester.. Its function is as follows. Endonuclease that specifically degrades the RNA of RNA-DNA hybrids. This chain is Ribonuclease H, found in Pseudoalteromonas translucida (strain TAC 125).